A 425-amino-acid polypeptide reads, in one-letter code: UDP-N-acetylglucosamine 1-carboxyvinyltransferase (425 aa).

22 to 23 contributes to the phosphoenolpyruvate binding site; the sequence is KN. Arginine 91 contacts UDP-N-acetyl-alpha-D-glucosamine. Cysteine 115 serves as the catalytic Proton donor. A 2-(S-cysteinyl)pyruvic acid O-phosphothioketal modification is found at cysteine 115. Residues 120–124, aspartate 305, and valine 327 each bind UDP-N-acetyl-alpha-D-glucosamine; that span reads RPIDL.

Belongs to the EPSP synthase family. MurA subfamily.

The protein localises to the cytoplasm. It catalyses the reaction phosphoenolpyruvate + UDP-N-acetyl-alpha-D-glucosamine = UDP-N-acetyl-3-O-(1-carboxyvinyl)-alpha-D-glucosamine + phosphate. It functions in the pathway cell wall biogenesis; peptidoglycan biosynthesis. In terms of biological role, cell wall formation. Adds enolpyruvyl to UDP-N-acetylglucosamine. The sequence is that of UDP-N-acetylglucosamine 1-carboxyvinyltransferase from Coprothermobacter proteolyticus (strain ATCC 35245 / DSM 5265 / OCM 4 / BT).